The following is a 647-amino-acid chain: Probable potassium transport system protein Kup (647 aa).

Transmembrane regions (helical) follow at residues 32–52, 74–94, 124–144, 166–186, 193–213, 230–250, 271–291, 300–320, 322–342, 361–381, 390–410, 418–438, and 443–463; these read IALM…SPLY, VISM…VLFV, LLII…AIIT, FVLP…KTGT, FGPI…HQVI, FLIE…LVLT, WFFI…AMFL, PFFL…ATAA, VIAS…AILL, IYMP…VLAF, AYGI…AIVM, TILV…FLTA, and IMEG…FLMT.

This sequence belongs to the HAK/KUP transporter (TC 2.A.72) family.

The protein resides in the cell inner membrane. The catalysed reaction is K(+)(in) + H(+)(in) = K(+)(out) + H(+)(out). Transport of potassium into the cell. Likely operates as a K(+):H(+) symporter. In Polynucleobacter asymbioticus (strain DSM 18221 / CIP 109841 / QLW-P1DMWA-1) (Polynucleobacter necessarius subsp. asymbioticus), this protein is Probable potassium transport system protein Kup.